We begin with the raw amino-acid sequence, 306 residues long: Replication termination factor 2 (306 aa).

The tract at residues 192–306 is disordered; the sequence is RAKLEKKTKK…HWVTHTSYCF (115 aa). Positions 226–240 are enriched in basic and acidic residues; the sequence is GKSEEADPDPREKKS. Ser-287 carries the phosphoserine modification.

This sequence belongs to the rtf2 family. Interacts with DDI2; probably also interacts with DDI1. In terms of processing, undergoes proteasomal degradation, via DDI1 and DDI2. Removal from stalled replisomes and degradation are required for genome stability.

Its subcellular location is the chromosome. In terms of biological role, replication termination factor which is a component of the elongating replisome. Required for ATR pathway signaling upon DNA damage and has a positive activity during DNA replication. Might function to facilitate fork pausing at replication fork barriers like the rDNA. May be globally required to stimulate ATR signaling after the fork stalls or encounters a lesion. Interacts with nascent DNA. This Rattus norvegicus (Rat) protein is Replication termination factor 2.